Consider the following 72-residue polypeptide: Dermaseptin-A4 (72 aa).

The N-terminal stretch at 1-22 (MAFLKKSLFLVLFLGMVSLSIC) is a signal peptide. A propeptide spanning residues 23–41 (EEEKREEENEQEDDEQSEE) is cleaved from the precursor. A disordered region spans residues 24–43 (EEKREEENEQEDDEQSEEKR). Acidic residues predominate over residues 30 to 39 (ENEQEDDEQS). At A69 the chain carries Alanine amide. Residues 71 to 72 (EQ) constitute a propeptide that is removed on maturation.

It belongs to the frog skin active peptide (FSAP) family. Dermaseptin subfamily. Expressed by the skin glands.

It localises to the secreted. Functionally, possesses a potent antimicrobial activity against Gram-positive and Gram-negative bacteria. Probably acts by disturbing membrane functions with its amphipathic structure. The protein is Dermaseptin-A4 of Agalychnis annae (Blue-sided leaf frog).